The primary structure comprises 253 residues: Sec-independent protein translocase protein TatC (253 aa).

Transmembrane regions (helical) follow at residues 18-38, 69-89, 96-116, 151-171, 187-207, and 208-228; these read VSVGTILVAFLGCFHFWKSIF, AIVISMPIIFWQLWLFIAPGL, VILPFVFFGSGMFLIGAAFSY, LILGFGVAFELPVLAYFLAKV, IVVIFIVAAIITPPDVVSQIF, and MALPLVGLYGLSILIAKMVNP. The tract at residues 231 to 253 is disordered; it reads KDNENNNENNNENNTKENTKSES. A compositionally biased stretch (basic and acidic residues) spans 244–253; sequence NTKENTKSES.

This sequence belongs to the TatC family. The Tat system comprises two distinct complexes: a TatABC complex, containing multiple copies of TatA, TatB and TatC subunits, and a separate TatA complex, containing only TatA subunits. Substrates initially bind to the TatABC complex, which probably triggers association of the separate TatA complex to form the active translocon.

The protein resides in the cell inner membrane. Part of the twin-arginine translocation (Tat) system that transports large folded proteins containing a characteristic twin-arginine motif in their signal peptide across membranes. Together with TatB, TatC is part of a receptor directly interacting with Tat signal peptides. The chain is Sec-independent protein translocase protein TatC from Helicobacter pylori (strain ATCC 700392 / 26695) (Campylobacter pylori).